A 217-amino-acid chain; its full sequence is Oxygen regulatory protein NreC (217 aa).

Residues Lys-2 to Tyr-119 form the Response regulatory domain. Asp-53 carries the 4-aspartylphosphate modification. One can recognise an HTH luxR-type domain in the interval Thr-148–Lys-213. The segment at residues Asn-172–Thr-191 is a DNA-binding region (H-T-H motif).

In terms of processing, phosphorylated by NreB.

The protein localises to the cytoplasm. Member of the two-component regulatory system NreB/NreC involved in the control of dissimilatory nitrate/nitrite reduction in response to oxygen. Phosphorylated NreC binds to a GC-rich palindromic sequence at the promoters of the nitrate (narGHJI) and nitrite (nir) reductase operons, as well as the putative nitrate transporter gene narT, and activates their expression. The sequence is that of Oxygen regulatory protein NreC (nreC) from Staphylococcus carnosus (strain TM300).